A 323-amino-acid polypeptide reads, in one-letter code: Putative CRISPR-associated protein SSO1401 (323 aa).

In terms of assembly, sometimes seen associated with the aCascade ribonucleoprotein complex, minimally composed of Csa2 and Cas5a, which binds crRNA. Other probable components of aCascade in strain P1 are Cas6 and Csa5, while SSO1399, Cas5b (SSO1400) and SSO1401 have sometimes been seen weakly associated. The Csa2-Cas5a-crRNA complex also binds target DNA homologous to crRNA, probably forming an R-loop. Purified aCascade forms a filament about 6 nm in width.

Functionally, CRISPR (clustered regularly interspaced short palindromic repeat) is an adaptive immune system that provides protection against mobile genetic elements (viruses, transposable elements and conjugative plasmids). CRISPR clusters contain spacers, sequences complementary to antecedent mobile elements, and target invading nucleic acids. CRISPR clusters are transcribed and processed into CRISPR RNA (crRNA). The protein is Putative CRISPR-associated protein SSO1401 of Saccharolobus solfataricus (strain ATCC 35092 / DSM 1617 / JCM 11322 / P2) (Sulfolobus solfataricus).